The following is a 528-amino-acid chain: Nucleolar GTP-binding protein 1 (528 aa).

The 168-residue stretch at 168–335 folds into the OBG-type G domain; sequence RTLLVCGFPN…VKAMACDLLL (168 aa). GTP-binding positions include 174 to 181, 220 to 224, and 287 to 290; these read GFPNVGKS, DTPGI, and SKSD. Positions 470-528 are disordered; sequence PDSWKHRSRNSGGDIAVHVRRDSKTQVAQPPRLPSKKKARFDDKHYYDRKPKHLYRGRK. Residues 509 to 518 show a composition bias toward basic and acidic residues; that stretch reads RFDDKHYYDR. A compositionally biased stretch (basic residues) spans 519–528; it reads KPKHLYRGRK.

It belongs to the TRAFAC class OBG-HflX-like GTPase superfamily. OBG GTPase family. NOG subfamily.

Its subcellular location is the nucleus. It is found in the nucleolus. Its function is as follows. Involved in the biogenesis of the 60S ribosomal subunit. This Encephalitozoon cuniculi (strain GB-M1) (Microsporidian parasite) protein is Nucleolar GTP-binding protein 1 (NOG1).